The following is a 449-amino-acid chain: UDP-N-acetylmuramoylalanine--D-glutamate ligase (449 aa).

Residue Gly118–Thr124 coordinates ATP.

This sequence belongs to the MurCDEF family.

It localises to the cytoplasm. It carries out the reaction UDP-N-acetyl-alpha-D-muramoyl-L-alanine + D-glutamate + ATP = UDP-N-acetyl-alpha-D-muramoyl-L-alanyl-D-glutamate + ADP + phosphate + H(+). The protein operates within cell wall biogenesis; peptidoglycan biosynthesis. In terms of biological role, cell wall formation. Catalyzes the addition of glutamate to the nucleotide precursor UDP-N-acetylmuramoyl-L-alanine (UMA). The sequence is that of UDP-N-acetylmuramoylalanine--D-glutamate ligase from Staphylococcus epidermidis (strain ATCC 12228 / FDA PCI 1200).